Here is a 491-residue protein sequence, read N- to C-terminus: uncharacterized protein (491 aa).

Residues 1 to 92 (MSFVIASPEA…GGGSYASAEI (92 aa)) enclose the PE domain. Disordered stretches follow at residues 114–156 (PLVG…AGGA), 376–400 (AGGS…GNPG), and 419–491 (AGQG…GPDG). The segment covering 128–145 (GQPGGDGGILWGNGGNGG) has biased composition (gly residues). Residues 432 to 480 (GGPGGVGGHGGTAILFGDGGAGGAGAAGGPGTPDGAAGPGGSGGTGGLL) show a composition bias toward gly residues.

This sequence belongs to the mycobacterial PE family. PGRS subfamily.

This is an uncharacterized protein from Mycobacterium bovis (strain ATCC BAA-935 / AF2122/97).